Here is a 429-residue protein sequence, read N- to C-terminus: MIDPTLLRNNLSEIAEKLKVRRGFILDVNKFSQLEEQRKTLQIKTETLQAERNSRSKTIGAAKARGEDISTLLAEVDHMGAELNTVKEELANVLTEIEQLALTIPNIPADEVPLGKDDSDNKEVFRWGTPKKFDFEVKDHVALGEILGGLDFAAGVKLSGARFAVIKGQIARMHRALAQFMLDLHTEQHGYTEAYVPYLVNHATLYGTGQLPKFGEELFHIKPLENEQTYALIPTAEVPVTNLVRDEIIDEADLPIKMTAHTPCFRSEAGSYGRDTRGLIRMHQFDKVELVQIVEPEKSMEALEELTNQAEKVLQLLNLPYRKVLLCTGDMGFGATKTYDLEVWIPAQNTYREISSCSNMWDFQARRMQARCRAKGDKKTRLVHTLNGSGLAVGRTLVAILENYQNADGSITVPEVLRPYMNGIEIIGK.

Residue 235 to 237 (TAE) coordinates L-serine. 266 to 268 (RSE) serves as a coordination point for ATP. Position 289 (Glu289) interacts with L-serine. 353 to 356 (EISS) is a binding site for ATP. Ser389 is an L-serine binding site.

Belongs to the class-II aminoacyl-tRNA synthetase family. Type-1 seryl-tRNA synthetase subfamily. Homodimer. The tRNA molecule binds across the dimer.

Its subcellular location is the cytoplasm. The enzyme catalyses tRNA(Ser) + L-serine + ATP = L-seryl-tRNA(Ser) + AMP + diphosphate + H(+). It carries out the reaction tRNA(Sec) + L-serine + ATP = L-seryl-tRNA(Sec) + AMP + diphosphate + H(+). It functions in the pathway aminoacyl-tRNA biosynthesis; selenocysteinyl-tRNA(Sec) biosynthesis; L-seryl-tRNA(Sec) from L-serine and tRNA(Sec): step 1/1. In terms of biological role, catalyzes the attachment of serine to tRNA(Ser). Is also able to aminoacylate tRNA(Sec) with serine, to form the misacylated tRNA L-seryl-tRNA(Sec), which will be further converted into selenocysteinyl-tRNA(Sec). The polypeptide is Serine--tRNA ligase (Histophilus somni (strain 129Pt) (Haemophilus somnus)).